The primary structure comprises 438 residues: Glutamine synthetase (438 aa).

In terms of domain architecture, GS beta-grasp spans 14 to 98 (EEVEYVDIRF…VHCNVVEPDT (85 aa)). In terms of domain architecture, GS catalytic spans 106–438 (PRIALKAEAY…LAGDVFTKDQ (333 aa)). Positions 130 and 132 each coordinate Mg(2+). Position 208 (Asp-208) interacts with ATP. Residues Glu-213 and Glu-220 each coordinate Mg(2+). L-glutamate contacts are provided by residues 264–265 (NG) and Gly-265. His-269 is a binding site for Mg(2+). Residues 271-273 (NMS) and Ser-273 contribute to the ATP site. L-glutamate is bound by residues Arg-321, Glu-327, and Arg-339. The ATP site is built by Arg-339, Arg-344, and Lys-352. Residue Glu-357 coordinates Mg(2+). Position 359 (Arg-359) interacts with L-glutamate. At Tyr-397 the chain carries O-AMP-tyrosine.

This sequence belongs to the glutamine synthetase family. In terms of assembly, oligomer of 12 subunits arranged in the form of two hexameric ring. It depends on Mg(2+) as a cofactor.

The protein localises to the cytoplasm. It carries out the reaction L-glutamate + NH4(+) + ATP = L-glutamine + ADP + phosphate + H(+). Its activity is regulated as follows. The activity of this enzyme could be controlled by adenylation under conditions of abundant glutamine. In terms of biological role, catalyzes the ATP-dependent biosynthesis of glutamine from glutamate and ammonia. The sequence is that of Glutamine synthetase from Rhodobacter capsulatus (Rhodopseudomonas capsulata).